A 570-amino-acid polypeptide reads, in one-letter code: MSRKLSREAYTDLFGATEGDRLRLGDTNLLAKIEKDHGTYGDEAVFGGGKTMRDGMGMQSGTTQAEGALDWVFSNAVIIDPILGIQKGDIGVRDGKIAGIGKAGNPDTMDGVDDELVIGPSTDTAPADGLIATPGGLDIHIHFNSKELFEHALASGVTTMFGGGYGGGATTCTTGPENIKRFLQAAEEYPVNVGFYAKGNSSGPDPIIEQIEAGACGLKLHEDWGSTPDVIDTALTVADEEDVQVCIHTDTLNESGFLEDTFEAIDGRTIHTFHIEGAGGGHAPDVLELIGYDHMLPSSTNPSMPYTVNTFDEHLDMVMVCHHLNPDVPEDVAFAESRIRSETIAAEDVLHDMGAISMMTSDSQAMGRMAEVITRTWQTAHKMKSQRGALPADRGTDADNARIKRYVAKYTINPAKVAGINEYVGSLEPGKMADIVLWEPEFYGIKPKYVIKGGFPVHSEMGEANGSLMTCEPVMQRSRMGAVGKAKHAISTTFVSKAAYENDIGDQIGLESRVRPVEGTRDVGKNDMRHNEYAPENIDIDPQTFEVAVDGEHVTCEPAEELPLAKRYSL.

Residues 135-570 (GGLDIHIHFN…ELPLAKRYSL (436 aa)) form the Urease domain. The Ni(2+) site is built by His-140, His-142, and Lys-219. N6-carboxylysine is present on Lys-219. His-221 provides a ligand contact to substrate. Ni(2+) contacts are provided by His-248 and His-274. Residue His-322 is the Proton donor of the active site. Asp-362 is a binding site for Ni(2+).

Belongs to the metallo-dependent hydrolases superfamily. Urease alpha subunit family. As to quaternary structure, heterotrimer of UreA (gamma), UreB (beta) and UreC (alpha) subunits. Three heterotrimers associate to form the active enzyme. Ni cation is required as a cofactor. Carboxylation allows a single lysine to coordinate two nickel ions.

It localises to the cytoplasm. It catalyses the reaction urea + 2 H2O + H(+) = hydrogencarbonate + 2 NH4(+). It participates in nitrogen metabolism; urea degradation; CO(2) and NH(3) from urea (urease route): step 1/1. This is Urease subunit alpha from Haloquadratum walsbyi (strain DSM 16790 / HBSQ001).